Here is an 88-residue protein sequence, read N- to C-terminus: Long neurotoxin 20 (88 aa).

The N-terminal stretch at 1–21 (MKTLLLTLVVVTIVCLDLGNS) is a signal peptide. 5 disulfides stabilise this stretch: C24-C42, C35-C63, C48-C52, C67-C78, and C79-C84.

It belongs to the three-finger toxin family. Long-chain subfamily. Type II alpha-neurotoxin sub-subfamily. Expressed by the venom gland.

The protein localises to the secreted. Functionally, binds with high affinity to muscular (alpha-1/CHRNA1) and neuronal (alpha-7/CHRNA7) nicotinic acetylcholine receptor (nAChR) and inhibits acetylcholine from binding to the receptor, thereby impairing neuromuscular and neuronal transmission. In Drysdalia coronoides (White-lipped snake), this protein is Long neurotoxin 20.